Reading from the N-terminus, the 445-residue chain is Histamine H3 receptor (445 aa).

Residues 1-39 lie on the Extracellular side of the membrane; sequence MERAPPDGLMNASGTLAGEAAAAGGARGFSAAWTAVLAA. N-linked (GlcNAc...) asparagine glycosylation occurs at Asn-11. A helical transmembrane segment spans residues 40–60; it reads LMALLIVATVLGNALVMLAFV. Residues 61 to 70 are Cytoplasmic-facing; sequence ADSSLRTQNN. Residues 71 to 91 form a helical membrane-spanning segment; it reads FFLLNLAISDFLVGAFCIPLY. Over 92–108 the chain is Extracellular; sequence VPYVLTGRWTFGRGLCK. Residues Cys-107 and Cys-188 are joined by a disulfide bond. A helical transmembrane segment spans residues 109–129; the sequence is LWLVVDYLLCASSVFNIVLIS. The Cytoplasmic segment spans residues 130-156; the sequence is YDRFLSVTRAVSYRAQQGDTRRAVRKM. The chain crosses the membrane as a helical span at residues 157–177; the sequence is ALVWVLAFLLYGPAILSWEYL. Residues 178–196 lie on the Extracellular side of the membrane; it reads SGGSSIPEGHCYAEFFYNW. A helical transmembrane segment spans residues 197–217; that stretch reads YFLITASTLEFFTPFLSVTFF. At 218–359 the chain is on the cytoplasmic side; sequence NLSIYLNIQR…LSRDKKVAKS (142 aa). Disordered regions lie at residues 234-259 and 286-336; these read DGGR…PSCW and AGEA…LEKR. A compositionally biased stretch (pro residues) spans 241 to 256; that stretch reads PEPPPDAQPSPPPAPP. The span at 290-299 shows a compositional bias: gly residues; the sequence is ALGGGSGGGA. The segment covering 300–312 has biased composition (low complexity); the sequence is AASPTSSSGSSSR. A helical membrane pass occupies residues 360 to 380; sequence LAIIVSIFGLCWAPYTLLMII. Residues 381 to 396 lie on the Extracellular side of the membrane; the sequence is RAACHGRCIPDYWYET. Residues 397 to 417 traverse the membrane as a helical segment; sequence SFWLLWANSAVNPVLYPLCHY. Over 418–445 the chain is Cytoplasmic; it reads SFRRAFTKLLCPQKLKVQPHGSLEQCWK. A Phosphoserine modification is found at Ser-439.

This sequence belongs to the G-protein coupled receptor 1 family. As to expression, expressed abundantly in brain, most notably throughout the thalamus, the ventromedial hypothalamus and the caudate nucleus. Isoform 1 is largely predominant in all tissues.

Its subcellular location is the cell membrane. Its function is as follows. The H3 subclass of histamine receptors could mediate the histamine signals in CNS and peripheral nervous system. Signals through the inhibition of adenylate cyclase and displays high constitutive activity (spontaneous activity in the absence of agonist). The sequence is that of Histamine H3 receptor (Hrh3) from Rattus norvegicus (Rat).